Here is a 461-residue protein sequence, read N- to C-terminus: Methylenetetrahydrofolate--tRNA-(uracil-5-)-methyltransferase TrmFO (461 aa).

16–21 (GAGLAG) provides a ligand contact to FAD.

This sequence belongs to the MnmG family. TrmFO subfamily. FAD serves as cofactor.

It is found in the cytoplasm. The catalysed reaction is uridine(54) in tRNA + (6R)-5,10-methylene-5,6,7,8-tetrahydrofolate + NADH + H(+) = 5-methyluridine(54) in tRNA + (6S)-5,6,7,8-tetrahydrofolate + NAD(+). The enzyme catalyses uridine(54) in tRNA + (6R)-5,10-methylene-5,6,7,8-tetrahydrofolate + NADPH + H(+) = 5-methyluridine(54) in tRNA + (6S)-5,6,7,8-tetrahydrofolate + NADP(+). Catalyzes the folate-dependent formation of 5-methyl-uridine at position 54 (M-5-U54) in all tRNAs. This chain is Methylenetetrahydrofolate--tRNA-(uracil-5-)-methyltransferase TrmFO, found in Parasynechococcus marenigrum (strain WH8102).